An 89-amino-acid polypeptide reads, in one-letter code: Small ribosomal subunit protein uS15 (89 aa).

It belongs to the universal ribosomal protein uS15 family. Part of the 30S ribosomal subunit. Forms a bridge to the 50S subunit in the 70S ribosome, contacting the 23S rRNA.

One of the primary rRNA binding proteins, it binds directly to 16S rRNA where it helps nucleate assembly of the platform of the 30S subunit by binding and bridging several RNA helices of the 16S rRNA. Functionally, forms an intersubunit bridge (bridge B4) with the 23S rRNA of the 50S subunit in the ribosome. The chain is Small ribosomal subunit protein uS15 from Dictyoglomus turgidum (strain DSM 6724 / Z-1310).